The chain runs to 270 residues: Putative pyruvate, phosphate dikinase regulatory protein (270 aa).

147 to 154 serves as a coordination point for ADP; sequence GVSRSSKT.

This sequence belongs to the pyruvate, phosphate/water dikinase regulatory protein family. PDRP subfamily.

It catalyses the reaction N(tele)-phospho-L-histidyl/L-threonyl-[pyruvate, phosphate dikinase] + ADP = N(tele)-phospho-L-histidyl/O-phospho-L-threonyl-[pyruvate, phosphate dikinase] + AMP + H(+). The catalysed reaction is N(tele)-phospho-L-histidyl/O-phospho-L-threonyl-[pyruvate, phosphate dikinase] + phosphate + H(+) = N(tele)-phospho-L-histidyl/L-threonyl-[pyruvate, phosphate dikinase] + diphosphate. Its function is as follows. Bifunctional serine/threonine kinase and phosphorylase involved in the regulation of the pyruvate, phosphate dikinase (PPDK) by catalyzing its phosphorylation/dephosphorylation. The protein is Putative pyruvate, phosphate dikinase regulatory protein of Citrifermentans bemidjiense (strain ATCC BAA-1014 / DSM 16622 / JCM 12645 / Bem) (Geobacter bemidjiensis).